The following is a 146-amino-acid chain: D-aminoacyl-tRNA deacylase (146 aa).

Residues 138–139 (GP) carry the Gly-cisPro motif, important for rejection of L-amino acids motif.

It belongs to the DTD family. As to quaternary structure, homodimer.

It localises to the cytoplasm. It catalyses the reaction glycyl-tRNA(Ala) + H2O = tRNA(Ala) + glycine + H(+). The catalysed reaction is a D-aminoacyl-tRNA + H2O = a tRNA + a D-alpha-amino acid + H(+). Its function is as follows. An aminoacyl-tRNA editing enzyme that deacylates mischarged D-aminoacyl-tRNAs. Also deacylates mischarged glycyl-tRNA(Ala), protecting cells against glycine mischarging by AlaRS. Acts via tRNA-based rather than protein-based catalysis; rejects L-amino acids rather than detecting D-amino acids in the active site. By recycling D-aminoacyl-tRNA to D-amino acids and free tRNA molecules, this enzyme counteracts the toxicity associated with the formation of D-aminoacyl-tRNA entities in vivo and helps enforce protein L-homochirality. The sequence is that of D-aminoacyl-tRNA deacylase from Xanthomonas euvesicatoria pv. vesicatoria (strain 85-10) (Xanthomonas campestris pv. vesicatoria).